We begin with the raw amino-acid sequence, 487 residues long: Malonate-semialdehyde dehydrogenase (487 aa).

7 residues coordinate NAD(+): Ala150, Phe152, Lys176, Glu179, Arg180, Ser229, and Thr251. Cys284 functions as the Nucleophile in the catalytic mechanism. NAD(+) is bound at residue Glu382.

It belongs to the aldehyde dehydrogenase family. IolA subfamily. In terms of assembly, homotetramer.

It carries out the reaction 3-oxopropanoate + NAD(+) + CoA + H2O = hydrogencarbonate + acetyl-CoA + NADH + H(+). It catalyses the reaction 2-methyl-3-oxopropanoate + NAD(+) + CoA + H2O = propanoyl-CoA + hydrogencarbonate + NADH + H(+). It participates in polyol metabolism; myo-inositol degradation into acetyl-CoA; acetyl-CoA from myo-inositol: step 7/7. Its function is as follows. Catalyzes the oxidation of malonate semialdehyde (MSA) and methylmalonate semialdehyde (MMSA) into acetyl-CoA and propanoyl-CoA, respectively. Is involved in a myo-inositol catabolic pathway. Bicarbonate, and not CO2, is the end-product of the enzymatic reaction. This chain is Malonate-semialdehyde dehydrogenase, found in Bacillus velezensis (strain DSM 23117 / BGSC 10A6 / LMG 26770 / FZB42) (Bacillus amyloliquefaciens subsp. plantarum).